We begin with the raw amino-acid sequence, 94 residues long: Myosuppressin (94 aa).

The signal sequence occupies residues 1 to 24 (MMSPTLMILISITTMAILSGESFG). The propeptide occupies 25–80 (AMPAQCNSEFLEELPPRLRKICVAIARIWDAREMNDFVDDREYRENLPRYDSSVKR). Q81 bears the Pyrrolidone carboxylic acid mark. F90 carries the phenylalanine amide modification.

In terms of tissue distribution, expressed throughout the nervous system (at protein level).

The protein localises to the secreted. Myoinhibiting neuropeptide. The sequence is that of Myosuppressin from Camponotus floridanus (Florida carpenter ant).